Consider the following 509-residue polypeptide: ATP synthase subunit alpha (509 aa).

169-176 (GDRQTGKT) contacts ATP.

Belongs to the ATPase alpha/beta chains family. F-type ATPases have 2 components, CF(1) - the catalytic core - and CF(0) - the membrane proton channel. CF(1) has five subunits: alpha(3), beta(3), gamma(1), delta(1), epsilon(1). CF(0) has three main subunits: a(1), b(2) and c(9-12). The alpha and beta chains form an alternating ring which encloses part of the gamma chain. CF(1) is attached to CF(0) by a central stalk formed by the gamma and epsilon chains, while a peripheral stalk is formed by the delta and b chains.

The protein localises to the cell inner membrane. The enzyme catalyses ATP + H2O + 4 H(+)(in) = ADP + phosphate + 5 H(+)(out). Produces ATP from ADP in the presence of a proton gradient across the membrane. The alpha chain is a regulatory subunit. This chain is ATP synthase subunit alpha, found in Xanthobacter autotrophicus (strain ATCC BAA-1158 / Py2).